Consider the following 118-residue polypeptide: MARIAGVNIPDNKHAVISLTYIFGIGRHTAKNILAAVGITETTKIRELDDAQLDAIRAEVAKVPTEGDLRREISMNIKRLMDLGCYRGLRHRRSLPVRGQRTKTNARTRKGPRKPIKK.

Residues 92-118 are disordered; that stretch reads RRSLPVRGQRTKTNARTRKGPRKPIKK.

This sequence belongs to the universal ribosomal protein uS13 family. Part of the 30S ribosomal subunit. Forms a loose heterodimer with protein S19. Forms two bridges to the 50S subunit in the 70S ribosome.

Located at the top of the head of the 30S subunit, it contacts several helices of the 16S rRNA. In the 70S ribosome it contacts the 23S rRNA (bridge B1a) and protein L5 of the 50S subunit (bridge B1b), connecting the 2 subunits; these bridges are implicated in subunit movement. Contacts the tRNAs in the A and P-sites. This Acinetobacter baumannii (strain AB307-0294) protein is Small ribosomal subunit protein uS13.